The chain runs to 66 residues: Large ribosomal subunit protein uL29 (66 aa).

It belongs to the universal ribosomal protein uL29 family.

The chain is Large ribosomal subunit protein uL29 from Thermosipho melanesiensis (strain DSM 12029 / CIP 104789 / BI429).